The chain runs to 103 residues: MADKEKKKKESILDLSKYIDKTIRVKFQGGREASGILKGFDPLLNLVLDGTIEYMRDPDDQYKLTEDTRQLGLVVCRGTSVVLICPQDGMEAIPNPFIQQQDA.

A2 is modified (N-acetylalanine). One can recognise a Sm domain in the interval E10–M90.

Belongs to the snRNP Sm proteins family. As to quaternary structure, component of the precatalytic spliceosome (spliceosome B complex). Component of the U4/U6-U5 tri-snRNP complex, a building block of the precatalytic spliceosome (spliceosome B complex). The U4/U6-U5 tri-snRNP complex is composed of the U4, U6 and U5 snRNAs and at least PRPF3, PRPF4, PRPF6, PRPF8, PRPF31, SNRNP200, TXNL4A, SNRNP40, SNRPB, SNRPD1, SNRPD2, SNRPD3, SNRPE, SNRPF, SNRPG, DDX23, CD2BP2, PPIH, SNU13, EFTUD2, SART1 and USP39, plus LSM2, LSM3, LSM4, LSM5, LSM6, LSM7 and LSM8. LSM2, LSM3, LSM4, LSM5, LSM6, LSM7 and LSM8 form a heptameric, ring-shaped subcomplex (the LSM2-8 complex) that is part of the U4/U6-U5 tri-snRNP complex and the precatalytic spliceosome. Interacts with TACC1.

It localises to the nucleus. Its function is as follows. Plays a role in pre-mRNA splicing as component of the U4/U6-U5 tri-snRNP complex that is involved in spliceosome assembly, and as component of the precatalytic spliceosome (spliceosome B complex). The heptameric LSM2-8 complex binds specifically to the 3'-terminal U-tract of U6 snRNA. The protein is U6 snRNA-associated Sm-like protein LSm7 (LSM7) of Homo sapiens (Human).